We begin with the raw amino-acid sequence, 374 residues long: Guanine nucleotide-binding protein subunit alpha-15 (374 aa).

The G-alpha domain maps to 41–374; sequence GELKLLLLGP…ARYLDEINLL (334 aa). Residues 44–57 form a G1 motif region; that stretch reads KLLLLGPGESGKST. GTP contacts are provided by residues 49-56, 183-189, 208-212, 277-280, and A346; these read GPGESGKS, LRSRMPT, DVGGQ, and NKTD. A Mg(2+)-binding site is contributed by S56. The tract at residues 181–189 is G2 motif; sequence DVLRSRMPT. An ADP-ribosylarginine; by cholera toxin modification is found at R186. T189 is a Mg(2+) binding site. Residues 204–213 form a G3 motif region; that stretch reads LRIVDVGGQK. Positions 273–280 are G4 motif; that stretch reads ILFLNKTD. The tract at residues 344–349 is G5 motif; that stretch reads TCATDT.

The protein belongs to the G-alpha family. G(q) subfamily. As to quaternary structure, g proteins are composed of 3 units; alpha, beta and gamma. The alpha chain contains the guanine nucleotide binding site. Specifically expressed in hematopoietic cells. Expressed in epididymis (at protein level).

Its function is as follows. Guanine nucleotide-binding proteins (G proteins) are involved as modulators or transducers in various transmembrane signaling systems. This is Guanine nucleotide-binding protein subunit alpha-15 (GNA15) from Homo sapiens (Human).